The following is a 396-amino-acid chain: Purine ribonucleoside efflux pump NepI (396 aa).

Topologically, residues 1–21 are cytoplasmic; it reads MSEFIAENRGANAITRPNWSA. A helical transmembrane segment spans residues 22-42; sequence VFSVAFCVACLIIVEFLPVSL. Topologically, residues 43-54 are periplasmic; the sequence is LTPMAQDLGISE. A helical transmembrane segment spans residues 55–75; it reads GVAGQSVTVTAFVAMFASLFI. Topologically, residues 76–85 are cytoplasmic; the sequence is TQTIQATDRR. The helical transmembrane segment at 86–106 threads the bilayer; that stretch reads YVVILFAVLLTLSCLLVSFAN. Position 107 (S107) is a topological domain, periplasmic. The helical transmembrane segment at 108–128 threads the bilayer; that stretch reads FSLLLIGRACLGLALGGFWAM. At 129–147 the chain is on the cytoplasmic side; that stretch reads SASLTMRLVPPRTVPKALS. A helical membrane pass occupies residues 148 to 168; the sequence is VIFGAVSIALVIAAPLGSFLG. Topologically, residues 169–175 are periplasmic; sequence ELIGWRN. The chain crosses the membrane as a helical span at residues 176–196; the sequence is VFNAAAAMGVLCIFWIIKSLP. Topologically, residues 197–215 are cytoplasmic; the sequence is SLPGEPSHQKQNTFRLLQR. A helical transmembrane segment spans residues 216–236; that stretch reads PGVMAGMIAIFMSFAGQFAFF. The Periplasmic portion of the chain corresponds to 237–255; the sequence is TYIRPVYMNLAGFGVDGLT. Residues 256 to 276 form a helical membrane-spanning segment; the sequence is LVLLSFGIASFVGTSLSSFIL. Over 277-281 the chain is Cytoplasmic; that stretch reads KRSVK. Residues 282 to 302 form a helical membrane-spanning segment; sequence LALAGAPFVLALSALVLTLWG. Residues 303 to 305 lie on the Periplasmic side of the membrane; it reads SYK. The chain crosses the membrane as a helical span at residues 306–326; sequence IVATGVAIIWGLTFALIPVGW. Topologically, residues 327–343 are cytoplasmic; the sequence is STWITRSLADQAEKAGS. The chain crosses the membrane as a helical span at residues 344 to 364; the sequence is IQVAVIQLANTCGAAIGGYAL. Residues 365 to 366 are Periplasmic-facing; that stretch reads DN. A helical transmembrane segment spans residues 367 to 387; that stretch reads IGLTSPLMLSGTLMLLTALLV. The Cytoplasmic portion of the chain corresponds to 388 to 396; sequence TAKVKMKKS.

It belongs to the major facilitator superfamily. DHA1 family. NepI (TC 2.A.1.2.26) subfamily.

It localises to the cell inner membrane. It catalyses the reaction inosine(in) + H(+)(out) = inosine(out) + H(+)(in). The enzyme catalyses guanosine(in) + H(+)(out) = guanosine(out) + H(+)(in). Involved in the efflux of purine ribonucleosides, such as inosine and guanosine. This chain is Purine ribonucleoside efflux pump NepI, found in Escherichia coli O6:H1 (strain CFT073 / ATCC 700928 / UPEC).